Consider the following 363-residue polypeptide: Replication factor C subunit 4 (363 aa).

Residue Met-1 is modified to N-acetylmethionine. The tract at residues 1 to 36 is disordered; the sequence is MQAFLKGTSISTKPPLTKDRGVAASAGSSGENKKAK. N6-acetyllysine occurs at positions 6 and 13. 78 to 85 is a binding site for ATP; the sequence is GPPGTGKT.

The protein belongs to the activator 1 small subunits family. Subunit of the RFC complex, an heteropentameric complex consisting of a large subunit RFC1 and four small subunits RFC2, RFC3, RFC4 and RFC5; the RFC complex interacts with PCNA. Forms an heterotetrameric complex with RFC2, RFC3 and RFC5; this complex has ATPase activity but is not stimulated by PCNA. The heterotetramer of subunits RFC2, RFC3, RFC4 and RFC5 interacts with RAD17. Interacts with ATAD5. Interacts with CTF18. Interacts with CNTD1; this interaction facilitates crossover formation.

The protein resides in the nucleus. In terms of biological role, subunit of the replication factor C (RFC) complex which acts during elongation of primed DNA templates by DNA polymerases delta and epsilon, and is necessary for ATP-dependent loading of proliferating cell nuclear antigen (PCNA) onto primed DNA. The RFC4 subunit probably functions as a scaffold on which the other complex components can assemble. In Homo sapiens (Human), this protein is Replication factor C subunit 4 (RFC4).